The chain runs to 1407 residues: JmjC domain-containing histone demethylation protein 1 (1407 aa).

Disordered regions lie at residues 1 to 86 and 98 to 151; these read MISA…SSTI and PTFT…NAFS. Basic and acidic residues-rich tracts occupy residues 55 to 67 and 125 to 140; these read DHVR…KRPS and PVER…RDES. Residues 141-150 are compositionally biased toward polar residues; sequence SYTQHRSNAF. A PHD-type zinc finger spans residues 323–382; that stretch reads QASCATCNLVRIPVDNEDQDVTWISCDGCKRWFHIVCAGFKNDRETRTVDKFICKTCRPI. The JmjC domain occupies 577-735; the sequence is VSQSKLGRLI…MQIKIAKIEK (159 aa). Threonine 628 is a substrate binding site. Fe cation contacts are provided by histidine 631 and aspartate 633. Lysine 648 provides a ligand contact to substrate. A Fe cation-binding site is contributed by histidine 703. 4 disordered regions span residues 893–987, 1004–1027, 1122–1183, and 1252–1389; these read KLSL…LGPK, KEEN…HHTP, IKAQ…QDSV, and DEMD…SLRL. 2 stretches are compositionally biased toward basic and acidic residues: residues 896–914 and 928–938; these read LAEK…RNAD and LSERPAVDIQK. The segment covering 1008 to 1027 has biased composition (polar residues); the sequence is NGASGSQMTVSTSSLGHHTP. Basic and acidic residues predominate over residues 1254 to 1264; that stretch reads MDIHDQVDAGG. Low complexity predominate over residues 1273–1284; sequence PSSGSRQSSRQP. Basic and acidic residues predominate over residues 1285–1296; sequence RQVERYMPEVHF. Over residues 1297–1349 the composition is skewed to low complexity; that stretch reads AKTAKSTTTTPQTTRRSSFGSSGRKTTPGLSSGSKKSGSRPSSSHGKKSLSPS.

Belongs to the JHDM1 histone demethylase family. It depends on Fe(2+) as a cofactor.

It is found in the nucleus. It carries out the reaction N(6),N(6)-dimethyl-L-lysyl(36)-[histone H3] + 2 2-oxoglutarate + 2 O2 = L-lysyl(36)-[histone H3] + 2 formaldehyde + 2 succinate + 2 CO2. Its function is as follows. Histone demethylase that specifically demethylates 'Lys-36' of histone H3, thereby playing a central role in histone code. This Emericella nidulans (strain FGSC A4 / ATCC 38163 / CBS 112.46 / NRRL 194 / M139) (Aspergillus nidulans) protein is JmjC domain-containing histone demethylation protein 1 (jhd1).